The primary structure comprises 235 residues: Venom metalloproteinase antarease-like TserMP_B (235 aa).

Positions 4–233 (IVVEYYIVTD…PTASCIFQQC (230 aa)) constitute a Peptidase M12B domain. The cysteines at positions 137 and 228 are disulfide-linked. Residue histidine 161 coordinates Zn(2+). Glutamate 162 is an active-site residue. Positions 165 and 171 each coordinate Zn(2+).

It belongs to the venom metalloproteinase (M12B) family. Zn(2+) is required as a cofactor. As to expression, expressed by the venom gland.

The protein resides in the secreted. With respect to regulation, inhibited by EDTA. Acts as a metalloprotease. Penetrates intact tissue and specifically cleaves the vesicle-associated membrane protein 2 (VAMP2) (part of the SNARE complex) involved in pancreatic secretion, thus disrupting the normal vesicular traffic. The polypeptide is Venom metalloproteinase antarease-like TserMP_B (Tityus serrulatus (Brazilian scorpion)).